Consider the following 387-residue polypeptide: Monopolar spindle protein 2 (387 aa).

Residues 157-269 (NNIGKALEVQ…FLKDQIRRER (113 aa)) adopt a coiled-coil conformation. The disordered stretch occupies residues 216-235 (RQVEDNQNSSRTSDPGSPLV). A compositionally biased stretch (polar residues) spans 220–230 (DNQNSSRTSDP). A helical transmembrane segment spans residues 311–327 (IRIIVCFALLAGVLPYI).

Belongs to the MPS2 family. As to quaternary structure, interacts with BBP1, MPS3, and SPC24.

The protein localises to the nucleus membrane. The protein resides in the cytoplasm. It localises to the cytoskeleton. It is found in the microtubule organizing center. Its subcellular location is the spindle pole body. Component of the spindle pole body (SPB) required for insertion of the nascent SPB into the nuclear envelope and for the proper execution of spindle pole body (SPB) duplication. This Saccharomyces cerevisiae (strain RM11-1a) (Baker's yeast) protein is Monopolar spindle protein 2 (MPS2).